Reading from the N-terminus, the 276-residue chain is NADPH-dependent 7-cyano-7-deazaguanine reductase (276 aa).

83-85 (IES) provides a ligand contact to substrate. 85–86 (SK) serves as a coordination point for NADPH. The Thioimide intermediate role is filled by Cys-184. The Proton donor role is filled by Asp-191. Position 223 to 224 (223 to 224 (HE)) interacts with substrate. 252 to 253 (RG) is a binding site for NADPH.

This sequence belongs to the GTP cyclohydrolase I family. QueF type 2 subfamily. In terms of assembly, homodimer.

The protein localises to the cytoplasm. The enzyme catalyses 7-aminomethyl-7-carbaguanine + 2 NADP(+) = 7-cyano-7-deazaguanine + 2 NADPH + 3 H(+). The protein operates within tRNA modification; tRNA-queuosine biosynthesis. Functionally, catalyzes the NADPH-dependent reduction of 7-cyano-7-deazaguanine (preQ0) to 7-aminomethyl-7-deazaguanine (preQ1). This Desulfotalea psychrophila (strain LSv54 / DSM 12343) protein is NADPH-dependent 7-cyano-7-deazaguanine reductase.